The sequence spans 444 residues: DNA primase DnaG (444 aa).

The 78-residue stretch at 173–250 (DAILIVEGRS…YVTRAPRGLE (78 aa)) folds into the Toprim domain. Mg(2+) is bound by residues E179, D221, and D223. Positions 302–354 (VTSSVNKTDKYSQKNESKQFKQQKNENKQVKDNSKEKTQKSTEKHNETEETHL) are disordered. The span at 308-354 (KTDKYSQKNESKQFKQQKNENKQVKDNSKEKTQKSTEKHNETEETHL) shows a compositional bias: basic and acidic residues.

Belongs to the archaeal DnaG primase family. As to quaternary structure, forms a ternary complex with MCM helicase and DNA. Component of the archaeal exosome complex. The cofactor is Mg(2+).

It carries out the reaction ssDNA + n NTP = ssDNA/pppN(pN)n-1 hybrid + (n-1) diphosphate.. In terms of biological role, RNA polymerase that catalyzes the synthesis of short RNA molecules used as primers for DNA polymerase during DNA replication. Also part of the exosome, which is a complex involved in RNA degradation. Acts as a poly(A)-binding protein that enhances the interaction between heteromeric, adenine-rich transcripts and the exosome. In Methanosphaera stadtmanae (strain ATCC 43021 / DSM 3091 / JCM 11832 / MCB-3), this protein is DNA primase DnaG.